Consider the following 114-residue polypeptide: MATEVAARLRGARISAQKARLVADQVRGLEVEKALNLLEFSPKKAAKIVKKVLESAIANAENNDGADVDELKVSTVFVDEGMTMKRIRPRAKGRADRILKRTCHITVKVSEGQE.

The protein belongs to the universal ribosomal protein uL22 family. Part of the 50S ribosomal subunit.

Functionally, this protein binds specifically to 23S rRNA; its binding is stimulated by other ribosomal proteins, e.g. L4, L17, and L20. It is important during the early stages of 50S assembly. It makes multiple contacts with different domains of the 23S rRNA in the assembled 50S subunit and ribosome. Its function is as follows. The globular domain of the protein is located near the polypeptide exit tunnel on the outside of the subunit, while an extended beta-hairpin is found that lines the wall of the exit tunnel in the center of the 70S ribosome. The polypeptide is Large ribosomal subunit protein uL22 (Alcanivorax borkumensis (strain ATCC 700651 / DSM 11573 / NCIMB 13689 / SK2)).